Reading from the N-terminus, the 174-residue chain is Gamma-crystallin C (174 aa).

Beta/gamma crystallin 'Greek key' domains are found at residues 2-40 (GKIT…RVDS) and 41-83 (GCWM…RLIP). An S-methylcysteine modification is found at cysteine 23. The segment at 84–87 (HTGS) is connecting peptide. Beta/gamma crystallin 'Greek key' domains follow at residues 88–128 (HRMR…HVLE) and 129–171 (GCWV…RRVV).

The protein belongs to the beta/gamma-crystallin family.

In terms of biological role, crystallins are the dominant structural components of the vertebrate eye lens. The protein is Gamma-crystallin C (Crygc) of Rattus norvegicus (Rat).